Consider the following 267-residue polypeptide: Octanoyltransferase (267 aa).

Positions 1–30 (MPTGKLRQKPPYAAIMTNSPVTPSTETQQP) are disordered. Over residues 16–28 (MTNSPVTPSTETQ) the composition is skewed to polar residues. A BPL/LPL catalytic domain is found at 77 to 265 (GTASELVWLV…AFESVFGPRQ (189 aa)). Substrate is bound by residues 116 to 123 (RGGEYTYH), 196 to 198 (AIG), and 209 to 211 (GIA). The Acyl-thioester intermediate role is filled by Cys227.

Belongs to the LipB family.

It is found in the cytoplasm. The enzyme catalyses octanoyl-[ACP] + L-lysyl-[protein] = N(6)-octanoyl-L-lysyl-[protein] + holo-[ACP] + H(+). Its pathway is protein modification; protein lipoylation via endogenous pathway; protein N(6)-(lipoyl)lysine from octanoyl-[acyl-carrier-protein]: step 1/2. In terms of biological role, catalyzes the transfer of endogenously produced octanoic acid from octanoyl-acyl-carrier-protein onto the lipoyl domains of lipoate-dependent enzymes. Lipoyl-ACP can also act as a substrate although octanoyl-ACP is likely to be the physiological substrate. In Brucella abortus biovar 1 (strain 9-941), this protein is Octanoyltransferase.